Consider the following 1123-residue polypeptide: Probable serine/threonine-protein kinase nek3 (1123 aa).

The Protein kinase domain maps to 4–264; that stretch reads YEEIKTIGKG…VNDILELPFI (261 aa). Residues 10 to 18 and K33 each bind ATP; that span reads IGKGSFGRA. Catalysis depends on D130, which acts as the Proton acceptor. Low complexity-rich tracts occupy residues 283 to 307 and 327 to 415; these read NNDS…ISSS and NNNN…TSLK. Disordered stretches follow at residues 283 to 310, 325 to 415, 440 to 802, 866 to 887, 908 to 937, and 990 to 1020; these read NNDS…STEV, NINN…TSLK, SKTP…TNSQ, SAST…TNTM, SVKL…SITD, and SLNN…NQNN. A compositionally biased stretch (polar residues) spans 440-459; the sequence is SKTPISGTKNPTTSKITPSI. Low complexity-rich tracts occupy residues 478–529, 557–576, 588–617, and 642–653; these read SKPT…SSSV, SNLS…SNSQ, SPTS…SLKS, and NGNSNVNSTVLN. Residues 654-665 are compositionally biased toward polar residues; the sequence is RSVSSLSIQHKP. Composition is skewed to low complexity over residues 666 to 696, 712 to 738, and 752 to 802; these read TNSG…TSTT, STPT…TPST, and SSNG…TNSQ. The span at 908–935 shows a compositional bias: low complexity; the sequence is SVKLSSKSSSPIKTSSSSSSSSSSSSSI.

Belongs to the protein kinase superfamily. NEK Ser/Thr protein kinase family. NIMA subfamily.

It carries out the reaction L-seryl-[protein] + ATP = O-phospho-L-seryl-[protein] + ADP + H(+). It catalyses the reaction L-threonyl-[protein] + ATP = O-phospho-L-threonyl-[protein] + ADP + H(+). The polypeptide is Probable serine/threonine-protein kinase nek3 (nek3) (Dictyostelium discoideum (Social amoeba)).